The primary structure comprises 585 residues: uncharacterized protein (585 aa).

A run of 6 helical transmembrane segments spans residues 18–38 (FMWS…YPII), 55–75 (AAWV…ATFF), 128–148 (FFLS…AISL), 150–170 (VMFY…PFLA), 238–258 (IWSA…VALL), and 276–296 (VAFF…GFVI). The 284-residue stretch at 18–301 (FMWSLLAMLL…LGFVINMFSQ (284 aa)) folds into the ABC transmembrane type-1 domain. The 236-residue stretch at 335–570 (VHFKNVSLAY…GGYYKKIYDL (236 aa)) folds into the ABC transporter domain. ATP is bound at residue 369–376 (GPTGSGKS).

It belongs to the ABC transporter superfamily.

The protein resides in the cell membrane. This is an uncharacterized protein from Bacillus subtilis (strain 168).